The chain runs to 349 residues: UDP-3-O-acylglucosamine N-acyltransferase (349 aa).

The active-site Proton acceptor is the H246.

The protein belongs to the transferase hexapeptide repeat family. LpxD subfamily. In terms of assembly, homotrimer.

The catalysed reaction is a UDP-3-O-[(3R)-3-hydroxyacyl]-alpha-D-glucosamine + a (3R)-hydroxyacyl-[ACP] = a UDP-2-N,3-O-bis[(3R)-3-hydroxyacyl]-alpha-D-glucosamine + holo-[ACP] + H(+). The protein operates within bacterial outer membrane biogenesis; LPS lipid A biosynthesis. Catalyzes the N-acylation of UDP-3-O-acylglucosamine using 3-hydroxyacyl-ACP as the acyl donor. Is involved in the biosynthesis of lipid A, a phosphorylated glycolipid that anchors the lipopolysaccharide to the outer membrane of the cell. The sequence is that of UDP-3-O-acylglucosamine N-acyltransferase from Nostoc sp. (strain PCC 7120 / SAG 25.82 / UTEX 2576).